We begin with the raw amino-acid sequence, 208 residues long: Small ribosomal subunit protein uS9c (208 aa).

The transit peptide at 1–51 (MAVSISSLTSSFASLSFTSNLTPKPQTLPMARTKPFSLSNPAVVKPLVITA) directs the protein to the chloroplast. The residue at position 52 (T52) is an N-acetylthreonine. The interval 185–208 (DSRIVERKKPGLKKARKAPQFSKR) is disordered. Over residues 194–208 (PGLKKARKAPQFSKR) the composition is skewed to basic residues.

As to quaternary structure, component of the chloroplast small ribosomal subunit (SSU). Mature 70S chloroplast ribosomes of higher plants consist of a small (30S) and a large (50S) subunit. The 30S small subunit contains 1 molecule of ribosomal RNA (16S rRNA) and 24 different proteins. The 50S large subunit contains 3 rRNA molecules (23S, 5S and 4.5S rRNA) and 33 different proteins. uS9c binds directly to 16S ribosomal RNA. uS9c interacts with translation factor pY (PSRP1).

The protein localises to the plastid. The protein resides in the chloroplast. Functionally, component of the chloroplast ribosome (chloro-ribosome), a dedicated translation machinery responsible for the synthesis of chloroplast genome-encoded proteins, including proteins of the transcription and translation machinery and components of the photosynthetic apparatus. This Spinacia oleracea (Spinach) protein is Small ribosomal subunit protein uS9c (PRPS9).